Reading from the N-terminus, the 180-residue chain is Acireductone dioxygenase 1 (180 aa).

Positions 82, 84, 88, and 127 each coordinate Fe(2+). Residues H82, H84, E88, and H127 each coordinate Ni(2+).

Belongs to the acireductone dioxygenase (ARD) family. It depends on Fe(2+) as a cofactor. The cofactor is Ni(2+).

The protein resides in the cytoplasm. It is found in the nucleus. It carries out the reaction 1,2-dihydroxy-5-(methylsulfanyl)pent-1-en-3-one + O2 = 4-methylsulfanyl-2-oxobutanoate + formate + 2 H(+). The catalysed reaction is 1,2-dihydroxy-5-(methylsulfanyl)pent-1-en-3-one + O2 = 3-(methylsulfanyl)propanoate + CO + formate + 2 H(+). Its pathway is amino-acid biosynthesis; L-methionine biosynthesis via salvage pathway; L-methionine from S-methyl-5-thio-alpha-D-ribose 1-phosphate: step 5/6. Its function is as follows. Catalyzes 2 different reactions between oxygen and the acireductone 1,2-dihydroxy-3-keto-5-methylthiopentene (DHK-MTPene) depending upon the metal bound in the active site. Fe-containing acireductone dioxygenase (Fe-ARD) produces formate and 2-keto-4-methylthiobutyrate (KMTB), the alpha-ketoacid precursor of methionine in the methionine recycle pathway. Ni-containing acireductone dioxygenase (Ni-ARD) produces methylthiopropionate, carbon monoxide and formate, and does not lie on the methionine recycle pathway. The protein is Acireductone dioxygenase 1 of Sorghum bicolor (Sorghum).